The following is a 269-amino-acid chain: Homocitrate synthase subunit alpha (269 aa).

In terms of domain architecture, Pyruvate carboxyltransferase spans Ile3 to Ile255.

It belongs to the alpha-IPM synthase/homocitrate synthase family. As to quaternary structure, heterodimer of an alpha and an omega chain.

The catalysed reaction is acetyl-CoA + 2-oxoglutarate + H2O = (2R)-homocitrate + CoA + H(+). Its function is as follows. This protein is a Fe-Mo-cofactor biosynthetic component. The sequence is that of Homocitrate synthase subunit alpha (nifV-ALPHA) from Clostridium pasteurianum.